The following is a 428-amino-acid chain: Glutamine synthetase, chloroplastic (428 aa).

A chloroplast-targeting transit peptide spans 1 to 49 (MAQILAASPTCQMRLTKPSSIASSKLWNSVVLKQKKQSSSKVRSFKVMA). The GS beta-grasp domain occupies 75 to 155 (IIAEYIWIGG…VICDTYTPAG (81 aa)). The tract at residues 94-120 (RTLEKPVEDPSELPKWNYDGSSTGQAP) is disordered. The residue at position 104 (S104) is a Phosphoserine. Residues 159–428 (PTNKRARAAE…LAAQKLSLKV (270 aa)) form the GS catalytic domain.

The protein belongs to the glutamine synthetase family. Homooctamer.

It is found in the plastid. The protein resides in the chloroplast. It catalyses the reaction L-glutamate + NH4(+) + ATP = L-glutamine + ADP + phosphate + H(+). In terms of biological role, the light-modulated chloroplast enzyme, encoded by a nuclear gene and expressed primarily in leaves, is responsible for the reassimilation of the ammonia generated by photorespiration. This chain is Glutamine synthetase, chloroplastic (GLN2), found in Brassica napus (Rape).